The chain runs to 256 residues: Ribosomal RNA small subunit methyltransferase A (256 aa).

S-adenosyl-L-methionine is bound by residues His-12, Leu-14, Gly-39, Glu-60, Asp-81, and Asn-103.

It belongs to the class I-like SAM-binding methyltransferase superfamily. rRNA adenine N(6)-methyltransferase family. RsmA subfamily.

It localises to the cytoplasm. It carries out the reaction adenosine(1518)/adenosine(1519) in 16S rRNA + 4 S-adenosyl-L-methionine = N(6)-dimethyladenosine(1518)/N(6)-dimethyladenosine(1519) in 16S rRNA + 4 S-adenosyl-L-homocysteine + 4 H(+). In terms of biological role, specifically dimethylates two adjacent adenosines (A1518 and A1519) in the loop of a conserved hairpin near the 3'-end of 16S rRNA in the 30S particle. May play a critical role in biogenesis of 30S subunits. This Methylibium petroleiphilum (strain ATCC BAA-1232 / LMG 22953 / PM1) protein is Ribosomal RNA small subunit methyltransferase A.